A 137-amino-acid polypeptide reads, in one-letter code: MAKKVQKKLPRRKEEFTYHGYKIDELRAMSLEDLLPVMPSRARRKVLRGWTIGEEKLLSDIRSNGSRIRTHQRDMIILPEMIGREIEIYNGKEFIRVELQPESVFHYLGEFALTRRRVTHGSAGIGATRSSKFVPLK.

Belongs to the universal ribosomal protein uS19 family.

Functionally, protein S19 forms a complex with S13 that binds strongly to the 16S ribosomal RNA. This Methanospirillum hungatei JF-1 (strain ATCC 27890 / DSM 864 / NBRC 100397 / JF-1) protein is Small ribosomal subunit protein uS19.